Here is a 199-residue protein sequence, read N- to C-terminus: dITP/XTP pyrophosphatase (199 aa).

A substrate-binding site is contributed by 7–12 (SNNRGK). Asp-68 functions as the Proton acceptor in the catalytic mechanism. Asp-68 contributes to the Mg(2+) binding site. Substrate contacts are provided by residues Ala-69, 154 to 157 (FGFD), Lys-177, and 182 to 183 (HR).

It belongs to the HAM1 NTPase family. As to quaternary structure, homodimer. Requires Mg(2+) as cofactor.

It catalyses the reaction XTP + H2O = XMP + diphosphate + H(+). The enzyme catalyses dITP + H2O = dIMP + diphosphate + H(+). It carries out the reaction ITP + H2O = IMP + diphosphate + H(+). Functionally, pyrophosphatase that catalyzes the hydrolysis of nucleoside triphosphates to their monophosphate derivatives, with a high preference for the non-canonical purine nucleotides XTP (xanthosine triphosphate), dITP (deoxyinosine triphosphate) and ITP. Seems to function as a house-cleaning enzyme that removes non-canonical purine nucleotides from the nucleotide pool, thus preventing their incorporation into DNA/RNA and avoiding chromosomal lesions. The polypeptide is dITP/XTP pyrophosphatase (Albidiferax ferrireducens (strain ATCC BAA-621 / DSM 15236 / T118) (Rhodoferax ferrireducens)).